Here is a 361-residue protein sequence, read N- to C-terminus: Gibberellin 20 oxidase 1-D (361 aa).

The Fe2OG dioxygenase domain maps to 199–299 (GNDSIMRLNY…RKSLAFFLCP (101 aa)). Positions 224, 226, and 280 each coordinate Fe cation. Arg-290 is a catalytic residue.

This sequence belongs to the iron/ascorbate-dependent oxidoreductase family. GA20OX subfamily. Fe cation is required as a cofactor. It depends on L-ascorbate as a cofactor. As to expression, expressed in nodes and the ear of the elongating stem.

It catalyses the reaction gibberellin A12 + 2 2-oxoglutarate + 3 O2 + H(+) = gibberellin A9 + 2 succinate + 3 CO2 + 2 H2O. The catalysed reaction is gibberellin A53 + 2 2-oxoglutarate + 3 O2 + H(+) = gibberellin A20 + 2 succinate + 3 CO2 + 2 H2O. In terms of biological role, key oxidase enzyme in the biosynthesis of gibberellin that catalyzes the conversion of GA12 and GA53 to GA9 and GA20 respectively, via a three-step oxidation at C-20 of the GA skeleton. The polypeptide is Gibberellin 20 oxidase 1-D (GA20ox1D) (Triticum aestivum (Wheat)).